A 65-amino-acid polypeptide reads, in one-letter code: U2-theraphotoxin-Pc1a (65 aa).

The first 20 residues, 1–20 (MGFKLVLFIAVLTLVGSSNA), serve as a signal peptide directing secretion. Residues 21–36 (EISAKMDSRDSPMIQE) constitute a propeptide that is removed on maturation. 3 cysteine pairs are disulfide-bonded: C39/C56, C46/C59, and C55/C64.

The protein belongs to the neurotoxin 36 family. 02 subfamily. Expressed by the venom gland.

It localises to the secreted. Its function is as follows. Possesses strong antiplasmodial activity against the intra-erythrocyte stage of P.falciparum in vitro. IC(50) for inhibiting P.falciparum growth is 1.15 uM. Specifically interacts with infected erythrocytes. Does not lyse erythrocytes, is not cytotoxic to nucleated mammalian cells, and does not inhibit neuromuscular function. Has neither antibacterial nor antifungal activity. The chain is U2-theraphotoxin-Pc1a from Psalmopoeus cambridgei (Trinidad chevron tarantula).